A 165-amino-acid polypeptide reads, in one-letter code: Thiol peroxidase (165 aa).

One can recognise a Thioredoxin domain in the interval 18–165 (PQKGAQAPAF…PNYAAALAAL (148 aa)). Residue C60 is the Cysteine sulfenic acid (-SOH) intermediate of the active site. Residues C60 and C94 are joined by a disulfide bond.

The protein belongs to the peroxiredoxin family. Tpx subfamily. Homodimer.

It carries out the reaction a hydroperoxide + [thioredoxin]-dithiol = an alcohol + [thioredoxin]-disulfide + H2O. Thiol-specific peroxidase that catalyzes the reduction of hydrogen peroxide and organic hydroperoxides to water and alcohols, respectively. Plays a role in cell protection against oxidative stress by detoxifying peroxides. The protein is Thiol peroxidase of Pseudomonas aeruginosa (strain ATCC 15692 / DSM 22644 / CIP 104116 / JCM 14847 / LMG 12228 / 1C / PRS 101 / PAO1).